The chain runs to 520 residues: Cryptochrome DASH (520 aa).

One can recognise a Photolyase/cryptochrome alpha/beta domain in the interval 5–141 (RTVICLLRND…RVQTFWGSTL (137 aa)). Residues 479–504 (SRHVNNKSSGPSSSKGRKGSSYTARQ) form a disordered region.

It belongs to the DNA photolyase class-1 family. The cofactor is FAD. It depends on (6R)-5,10-methylene-5,6,7,8-tetrahydrofolate as a cofactor.

In terms of biological role, may have a photoreceptor function. Has weak cyclobutyl pyrimidine photolyase activity when expressed in E.coli and when tested in vitro. The polypeptide is Cryptochrome DASH (cry-dash) (Danio rerio (Zebrafish)).